Reading from the N-terminus, the 102-residue chain is Acid shock protein (102 aa).

Residues 1–21 (MKKVLALVVAAAMGLSSAAFA) form the signal peptide. Low complexity predominate over residues 22–41 (AETATTPAPTATTTKAAPAK). A propeptide spanning residues 22–58 (AETATTPAPTATTTKAAPAKTTHHKKQHKAAPAQKAQ) is cleaved from the precursor. The disordered stretch occupies residues 22-102 (AETATTPAPT…PAKPAAQPAA (81 aa)). Residues 80–90 (AAKKHAGKHSH) show a composition bias toward basic residues. Residues 91–102 (QQPAKPAAQPAA) show a composition bias toward low complexity.

Belongs to the Asr family. Post-translationally, proteolytic processing gives rise to the active protein.

The protein localises to the periplasm. In terms of biological role, required for growth and/or survival at acidic conditions. The sequence is that of Acid shock protein from Escherichia coli (strain 55989 / EAEC).